Reading from the N-terminus, the 233-residue chain is Large ribosomal subunit protein uL1 (233 aa).

It belongs to the universal ribosomal protein uL1 family. As to quaternary structure, part of the 50S ribosomal subunit.

Functionally, binds directly to 23S rRNA. The L1 stalk is quite mobile in the ribosome, and is involved in E site tRNA release. In terms of biological role, protein L1 is also a translational repressor protein, it controls the translation of the L11 operon by binding to its mRNA. The chain is Large ribosomal subunit protein uL1 from Trichlorobacter lovleyi (strain ATCC BAA-1151 / DSM 17278 / SZ) (Geobacter lovleyi).